The sequence spans 501 residues: Glycerol kinase (501 aa).

Thr-12 serves as a coordination point for ADP. Positions 12, 13, and 14 each coordinate ATP. Residue Thr-12 participates in sn-glycerol 3-phosphate binding. Arg-16 is an ADP binding site. 4 residues coordinate sn-glycerol 3-phosphate: Arg-82, Glu-83, Tyr-135, and Asp-244. The glycerol site is built by Arg-82, Glu-83, Tyr-135, Asp-244, and Gln-245. ADP contacts are provided by Thr-266, Gly-309, Gly-409, and Asn-413. ATP contacts are provided by Thr-266, Gly-309, and Gly-409.

This sequence belongs to the FGGY kinase family.

The enzyme catalyses glycerol + ATP = sn-glycerol 3-phosphate + ADP + H(+). Its pathway is polyol metabolism; glycerol degradation via glycerol kinase pathway; sn-glycerol 3-phosphate from glycerol: step 1/1. With respect to regulation, inhibited by fructose 1,6-bisphosphate (FBP). In terms of biological role, key enzyme in the regulation of glycerol uptake and metabolism. Catalyzes the phosphorylation of glycerol to yield sn-glycerol 3-phosphate. The polypeptide is Glycerol kinase (Coxiella burnetii (strain RSA 331 / Henzerling II)).